A 670-amino-acid chain; its full sequence is Probable membrane-anchored ferredoxin csal_0991 (670 aa).

The next 5 helical transmembrane spans lie at 2–22, 68–90, 94–113, 135–155, and 159–179; these read LDILLPILIFSALALAAIGAV, VATAGGFVAAMGLAIVVHGLGLA, LGWLLLAASATMFAGSLFVA, LMAFSLGIFVVTLPAVGVLPA, and GWLVALVLAAVVAWGLAELVF. 2 consecutive 4Fe-4S ferredoxin-type domains span residues 241–271 and 316–347; these read WNQLLGFDACVQCGRCEAVCPAFAAGQPLNP and GTALVDAETLWSCTTCRACVEECPMMIEHVDA. Positions 250, 253, 256, 260, 328, 331, 334, and 338 each coordinate [4Fe-4S] cluster. Positions 648–670 are disordered; the sequence is NTPPATPASHDTAASQATEEVLS. Positions 659–670 are enriched in polar residues; it reads TAASQATEEVLS.

Requires [4Fe-4S] cluster as cofactor.

It localises to the cell inner membrane. Participates in the electron transfer process during N,N-dimethylglycine (DMG) degradation to sarcosine. Probably transfers the electrons from N,N-dimethylglycine/sarcosine dehydrogenase (DMGDH) to the electron transfer flavoprotein (ETF) EtfA-EtfB. In Chromohalobacter salexigens (strain ATCC BAA-138 / DSM 3043 / CIP 106854 / NCIMB 13768 / 1H11), this protein is Probable membrane-anchored ferredoxin csal_0991.